Reading from the N-terminus, the 348-residue chain is tRNA N6-adenosine threonylcarbamoyltransferase (348 aa).

Residues His-119 and His-123 each coordinate Fe cation. Residues 141–145, Asp-174, Gly-187, Asp-191, and Asn-280 each bind substrate; that span reads LVSGG. Asp-310 is a binding site for Fe cation.

It belongs to the KAE1 / TsaD family. The cofactor is Fe(2+).

Its subcellular location is the cytoplasm. The catalysed reaction is L-threonylcarbamoyladenylate + adenosine(37) in tRNA = N(6)-L-threonylcarbamoyladenosine(37) in tRNA + AMP + H(+). Its function is as follows. Required for the formation of a threonylcarbamoyl group on adenosine at position 37 (t(6)A37) in tRNAs that read codons beginning with adenine. Is involved in the transfer of the threonylcarbamoyl moiety of threonylcarbamoyl-AMP (TC-AMP) to the N6 group of A37, together with TsaE and TsaB. TsaD likely plays a direct catalytic role in this reaction. The sequence is that of tRNA N6-adenosine threonylcarbamoyltransferase from Enterococcus faecalis (strain ATCC 700802 / V583).